The primary structure comprises 1181 residues: WD repeat-containing protein 35 (1181 aa).

WD repeat units lie at residues 4-43 (YLSK…VLKL), 61-100 (LSMN…VWML), 105-143 (WIEE…IVGS), 147-185 (NRIW…IYDN), 193-241 (MKLS…IMRH), and 246-288 (NPVL…IVQF).

Component of the IFT complex A (IFT-A) complex. IFT-A complex is divided into a core subcomplex composed of IFT122:IFT140:WDR19 which is associated with TULP3 and a peripheral subcomplex composed of IFT43:WDR35:TTC21B. Interacts directy with IFT122, ITF43 and TTC21B. Interacts with IFT43. Interacts with CFAP61.

It is found in the cytoplasm. Its subcellular location is the cytoskeleton. It localises to the microtubule organizing center. The protein resides in the centrosome. The protein localises to the cilium axoneme. It is found in the cilium basal body. Its function is as follows. As a component of the IFT complex A (IFT-A), a complex required for retrograde ciliary transport and entry into cilia of G protein-coupled receptors (GPCRs), it is involved in ciliogenesis and ciliary protein trafficking. May promote CASP3 activation and TNF-stimulated apoptosis. This chain is WD repeat-containing protein 35, found in Homo sapiens (Human).